The chain runs to 230 residues: MSELVVALDFKDAQSAIEMAEKVRGVAPWVKVGLELFCAEGPEIITRFKEMGFKVFVDLKFFDIPNTVKGAVRSATRAGADMLSLHALGGERMAVAAREGRAEGAGGEAGPLLMAITILTSMDEDDIPFPVPNGLGSAVLDLALASSQAGLDGVVCSGLEVEAIKEKCGKDFLALTPGIRPASVSDDQRRVVTPSQAVDRGSNFLVVGRPITGADDPAEAARRIVAEMNS.

Substrate-binding positions include Asp-9, Lys-31, 58–67, Thr-120, Arg-180, Gln-188, Gly-208, and Arg-209; that span reads DLKFFDIPNT. Residue Lys-60 is the Proton donor of the active site.

It belongs to the OMP decarboxylase family. Type 1 subfamily. Homodimer.

The catalysed reaction is orotidine 5'-phosphate + H(+) = UMP + CO2. It functions in the pathway pyrimidine metabolism; UMP biosynthesis via de novo pathway; UMP from orotate: step 2/2. In terms of biological role, catalyzes the decarboxylation of orotidine 5'-monophosphate (OMP) to uridine 5'-monophosphate (UMP). This Maridesulfovibrio salexigens (strain ATCC 14822 / DSM 2638 / NCIMB 8403 / VKM B-1763) (Desulfovibrio salexigens) protein is Orotidine 5'-phosphate decarboxylase.